A 124-amino-acid chain; its full sequence is Small ribosomal subunit protein bS6 (124 aa).

The interval 96–124 (ETGPSPMMKEVQREEAKKAAAAQPTEAQA) is disordered. The segment covering 114-124 (AAAAQPTEAQA) has biased composition (low complexity).

It belongs to the bacterial ribosomal protein bS6 family.

Binds together with bS18 to 16S ribosomal RNA. This is Small ribosomal subunit protein bS6 from Burkholderia vietnamiensis (strain G4 / LMG 22486) (Burkholderia cepacia (strain R1808)).